We begin with the raw amino-acid sequence, 561 residues long: Dihydroxy-acid dehydratase (561 aa).

C51 is a binding site for [2Fe-2S] cluster. D83 is a binding site for Mg(2+). C124 contacts [2Fe-2S] cluster. D125 and K126 together coordinate Mg(2+). K126 is subject to N6-carboxylysine. C196 contacts [2Fe-2S] cluster. E448 contributes to the Mg(2+) binding site. Residue S473 is the Proton acceptor of the active site.

The protein belongs to the IlvD/Edd family. Homodimer. The cofactor is [2Fe-2S] cluster. Mg(2+) is required as a cofactor.

The catalysed reaction is (2R)-2,3-dihydroxy-3-methylbutanoate = 3-methyl-2-oxobutanoate + H2O. It catalyses the reaction (2R,3R)-2,3-dihydroxy-3-methylpentanoate = (S)-3-methyl-2-oxopentanoate + H2O. It functions in the pathway amino-acid biosynthesis; L-isoleucine biosynthesis; L-isoleucine from 2-oxobutanoate: step 3/4. Its pathway is amino-acid biosynthesis; L-valine biosynthesis; L-valine from pyruvate: step 3/4. In terms of biological role, functions in the biosynthesis of branched-chain amino acids. Catalyzes the dehydration of (2R,3R)-2,3-dihydroxy-3-methylpentanoate (2,3-dihydroxy-3-methylvalerate) into 2-oxo-3-methylpentanoate (2-oxo-3-methylvalerate) and of (2R)-2,3-dihydroxy-3-methylbutanoate (2,3-dihydroxyisovalerate) into 2-oxo-3-methylbutanoate (2-oxoisovalerate), the penultimate precursor to L-isoleucine and L-valine, respectively. The chain is Dihydroxy-acid dehydratase from Sulfolobus acidocaldarius (strain ATCC 33909 / DSM 639 / JCM 8929 / NBRC 15157 / NCIMB 11770).